Here is a 362-residue protein sequence, read N- to C-terminus: uncharacterized protein (362 aa).

The helical transmembrane segment at 13–33 threads the bilayer; that stretch reads VLILSVGLNMLFLLLFYSAIF. Positions 314 to 357 constitute a LysM domain; sequence EEYVVQDGDSLWLIAKRFGIPMDKIIQKNGLNHHRLFPGKVLKL.

It belongs to the chlamydial CPn_0593/CT_474/TC_0759 family.

The protein resides in the membrane. This is an uncharacterized protein from Chlamydia pneumoniae (Chlamydophila pneumoniae).